The primary structure comprises 267 residues: Hydroxyethylthiazole kinase (267 aa).

Substrate is bound at residue Met46. ATP-binding residues include Arg122 and Thr168. Gly195 serves as a coordination point for substrate.

It belongs to the Thz kinase family. The cofactor is Mg(2+).

The enzyme catalyses 5-(2-hydroxyethyl)-4-methylthiazole + ATP = 4-methyl-5-(2-phosphooxyethyl)-thiazole + ADP + H(+). The protein operates within cofactor biosynthesis; thiamine diphosphate biosynthesis; 4-methyl-5-(2-phosphoethyl)-thiazole from 5-(2-hydroxyethyl)-4-methylthiazole: step 1/1. Its function is as follows. Catalyzes the phosphorylation of the hydroxyl group of 4-methyl-5-beta-hydroxyethylthiazole (THZ). The chain is Hydroxyethylthiazole kinase from Moorella thermoacetica (strain ATCC 39073 / JCM 9320).